Reading from the N-terminus, the 215-residue chain is Negative modulator of initiation of replication (215 aa).

Residues 71–93 (AETPKPSSEQEIRTPARKQSTQS) form a disordered region. An interaction with DNA region spans residues 181 to 187 (NTNSGRK).

It belongs to the SeqA family. In terms of assembly, homodimer. Polymerizes to form helical filaments.

The protein resides in the cytoplasm. In terms of biological role, negative regulator of replication initiation, which contributes to regulation of DNA replication and ensures that replication initiation occurs exactly once per chromosome per cell cycle. Binds to pairs of hemimethylated GATC sequences in the oriC region, thus preventing assembly of replication proteins and re-initiation at newly replicated origins. Repression is relieved when the region becomes fully methylated. The polypeptide is Negative modulator of initiation of replication (Mannheimia succiniciproducens (strain KCTC 0769BP / MBEL55E)).